We begin with the raw amino-acid sequence, 309 residues long: MLYLSEENKSVSTPCPPDKIIFDAERGEYICSETGEVLEDKIIDQGPEWRAFTPEEKEKRSRVGGPLNNTIHDRGLSTLIDWKDKDAMGRTLDPKRRLEALRWRKWQIRARIQSSIDRNLAQAMNELERIGNLLNLPKSVKDEAALIYRKAVEKGLVRGRSIESVVAAAIYAACRRMKLARTLDEIAQYTKANRKEVARCYRLLLRELDVSVPVSDPKDYVTRIANLLGLSGAVMKTAAEIIDKAKGSGLTAGKDPAGLAAAAIYIASLLHDERRTQKEIAQVAGVTEVTVRNRYKELTQELKISIPTQ.

2 consecutive repeat copies span residues 125–208 and 219–300.

The protein belongs to the TFIIB family.

In terms of biological role, stabilizes TBP binding to an archaeal box-A promoter. Also responsible for recruiting RNA polymerase II to the pre-initiation complex (DNA-TBP-TFIIB). This is Transcription initiation factor IIB 1 from Saccharolobus solfataricus (strain ATCC 35092 / DSM 1617 / JCM 11322 / P2) (Sulfolobus solfataricus).